The primary structure comprises 328 residues: GTPase Obg 2 (328 aa).

Residues 1–139 (MSFRREKFIE…HCVLLKLKIV (139 aa)) form the Obg domain. An OBG-type G domain is found at 140–309 (SDVGIIGMPN…LHAQVKKAVV (170 aa)). Residues 146-153 (GMPNAGKS), 171-175 (FTTLE), 192-195 (DIPG), 259-262 (NKCD), and 290-292 (GDE) each bind GTP. Mg(2+) is bound by residues serine 153 and threonine 173.

It belongs to the TRAFAC class OBG-HflX-like GTPase superfamily. OBG GTPase family. Monomer. It depends on Mg(2+) as a cofactor.

It is found in the cytoplasm. In terms of biological role, an essential GTPase which binds GTP, GDP and possibly (p)ppGpp with moderate affinity, with high nucleotide exchange rates and a fairly low GTP hydrolysis rate. Plays a role in control of the cell cycle, stress response, ribosome biogenesis and in those bacteria that undergo differentiation, in morphogenesis control. This is GTPase Obg 2 from Anaplasma marginale (strain St. Maries).